The chain runs to 250 residues: 5-oxoprolinase subunit A (250 aa).

The protein belongs to the LamB/PxpA family. Forms a complex composed of PxpA, PxpB and PxpC.

It catalyses the reaction 5-oxo-L-proline + ATP + 2 H2O = L-glutamate + ADP + phosphate + H(+). Its function is as follows. Catalyzes the cleavage of 5-oxoproline to form L-glutamate coupled to the hydrolysis of ATP to ADP and inorganic phosphate. The protein is 5-oxoprolinase subunit A of Staphylococcus aureus (strain MW2).